Reading from the N-terminus, the 565-residue chain is Ubiquitin carboxyl-terminal hydrolase 39 (565 aa).

Basic and acidic residues-rich tracts occupy residues 1–21 and 28–39; these read MSGRSKRESRGSTRGKRESES and VKRERDREREPE. 2 disordered regions span residues 1-61 and 75-96; these read MSGR…SARE and EREVDEDSEPEREVRAKNGRVD. Serine 46 is modified (phosphoserine). A Glycyl lysine isopeptide (Lys-Gly) (interchain with G-Cter in SUMO2) cross-link involves residue lysine 51. Position 82 is a phosphoserine (serine 82). A compositionally biased stretch (basic and acidic residues) spans 85–96; that stretch reads EREVRAKNGRVD. Residues 103–200 form a UBP-type; degenerate zinc finger; it reads RHCPYLDTIN…YVLKPTFTKQ (98 aa). Zn(2+) is bound by residues cysteine 136, cysteine 139, histidine 155, and histidine 161. Residues 225–555 enclose the USP domain; the sequence is VGLNNIKAND…EAYIQIWKRR (331 aa).

It belongs to the peptidase C19 family. In terms of assembly, the U4/U6-U5 tri-snRNP complex is a building block of the precatalytic spliceosome (spliceosome B complex). Component of the U4/U6-U5 tri-snRNP complex composed of the U4, U6 and U5 snRNAs and at least PRPF3, PRPF4, PRPF6, PRPF8, PRPF31, SNRNP200, TXNL4A, SNRNP40, SNRPB, SNRPD1, SNRPD2, SNRPD3, SNRPE, SNRPF, SNRPG, DDX23, CD2BP2, PPIH, SNU13, EFTUD2, SART1 and USP39, plus LSM2, LSM3, LSM4, LSM5, LSM6, LSM7 and LSM8.

It is found in the nucleus. The enzyme catalyses Thiol-dependent hydrolysis of ester, thioester, amide, peptide and isopeptide bonds formed by the C-terminal Gly of ubiquitin (a 76-residue protein attached to proteins as an intracellular targeting signal).. Functionally, deubiquitinating enzyme that plays a role in many cellular processes including cellular antiviral response, epithelial morphogenesis, DNA repair or B-cell development. Plays a role in pre-mRNA splicing as a component of the U4/U6-U5 tri-snRNP, one of the building blocks of the precatalytic spliceosome. Specifically regulates immunoglobulin gene rearrangement in a spliceosome-dependent manner, which involves modulating chromatin interactions at the Igh locus and therefore plays an essential role in B-cell development. Regulates AURKB mRNA levels, and thereby plays a role in cytokinesis and in the spindle checkpoint. Regulates apoptosis and G2/M cell cycle checkpoint in response to DNA damage by deubiquitinating and stabilizing CHK2. Also plays an important role in DNA repair by controlling the recruitment of XRCC4/LIG4 to DNA double-strand breaks for non-homologous end-joining repair. Participates in antiviral activity by affecting the type I IFN signaling by stabilizing STAT1 and decreasing its 'Lys-6'-linked ubiquitination. Contributes to non-canonical Wnt signaling during epidermal differentiation. Acts as a negative regulator NF-kappa-B activation through deubiquitination of 'Lys-48'-linked ubiquitination of NFKBIA. This chain is Ubiquitin carboxyl-terminal hydrolase 39 (USP39), found in Pongo abelii (Sumatran orangutan).